The chain runs to 202 residues: Small ribosomal subunit protein uS4 (202 aa).

The 63-residue stretch at 90–152 (MRLDNTVFRL…ERSRRLVETN (63 aa)) folds into the S4 RNA-binding domain.

Belongs to the universal ribosomal protein uS4 family. As to quaternary structure, part of the 30S ribosomal subunit. Contacts protein S5. The interaction surface between S4 and S5 is involved in control of translational fidelity.

In terms of biological role, one of the primary rRNA binding proteins, it binds directly to 16S rRNA where it nucleates assembly of the body of the 30S subunit. Functionally, with S5 and S12 plays an important role in translational accuracy. This is Small ribosomal subunit protein uS4 from Thermosynechococcus vestitus (strain NIES-2133 / IAM M-273 / BP-1).